The sequence spans 485 residues: Bcl-2-like protein 13 (485 aa).

The short motif at 14–30 (ETKYVVLSYLGLLSQEK) is the BH4 element. A Phosphoserine modification is found at Ser-38. The BH3 motif lies at 100-116 (MEDCLAHLGEKVSQELK). The short motif at 147–157 (ASGWNKILVPL) is the BH1 element. A BH2 motif is present at residues 193 to 206 (YIIQQGGWGTVFSL). A disordered region spans residues 218-248 (AEDSNDIYILPSDNSGQVSPPESPTVTTSWQ). The segment covering 229-248 (SDNSGQVSPPESPTVTTSWQ) has biased composition (polar residues). The A repeat unit spans residues 246–256 (SWQSESLPVSL). A phosphoserine mark is found at Ser-259, Ser-261, Ser-303, Ser-326, Ser-371, Ser-375, Ser-410, Ser-420, Ser-426, Ser-429, and Ser-444. The A; approximate repeat unit spans residues 261-271 (SWHTESLPVSL). Residues 418–451 (EESLVEELSPASEKKPVPPSEGKSRLSPAGEMKP) are disordered. One copy of the B repeat lies at 425 to 441 (LSPASEKKPVPPSEGKS). The B; approximate repeat unit spans residues 443-459 (LSPAGEMKPMPLSEGKS). The helical transmembrane segment at 460 to 480 (ILLFGGAAAVAILAVAIGVAL) threads the bilayer.

The protein belongs to the Bcl-2 family. Monomer. As to expression, ubiquitous, with the highest levels of expression in heart, placenta and pancreas.

The protein localises to the mitochondrion membrane. It is found in the nucleus. Its function is as follows. May promote the activation of caspase-3 and apoptosis. The sequence is that of Bcl-2-like protein 13 (BCL2L13) from Homo sapiens (Human).